A 183-amino-acid polypeptide reads, in one-letter code: Hypoxanthine/guanine phosphoribosyltransferase (183 aa).

It belongs to the purine/pyrimidine phosphoribosyltransferase family. Archaeal HPRT subfamily. In terms of assembly, homodimer.

The protein resides in the cytoplasm. It carries out the reaction IMP + diphosphate = hypoxanthine + 5-phospho-alpha-D-ribose 1-diphosphate. The enzyme catalyses GMP + diphosphate = guanine + 5-phospho-alpha-D-ribose 1-diphosphate. It functions in the pathway purine metabolism; IMP biosynthesis via salvage pathway; IMP from hypoxanthine: step 1/1. Its function is as follows. Catalyzes a salvage reaction resulting in the formation of IMP that is energically less costly than de novo synthesis. In Methanotorris igneus (strain DSM 5666 / JCM 11834 / Kol 5), this protein is Hypoxanthine/guanine phosphoribosyltransferase.